We begin with the raw amino-acid sequence, 348 residues long: Probable dual-specificity RNA methyltransferase RlmN (348 aa).

The Proton acceptor role is filled by Glu-89. A Radical SAM core domain is found at Glu-95–Glu-330. Cys-102 and Cys-335 are joined by a disulfide. 3 residues coordinate [4Fe-4S] cluster: Cys-109, Cys-113, and Cys-116. S-adenosyl-L-methionine contacts are provided by residues Gly-157–Glu-158, Ser-189, Ser-214–Asn-216, and Asn-292. The S-methylcysteine intermediate role is filled by Cys-335.

The protein belongs to the radical SAM superfamily. RlmN family. It depends on [4Fe-4S] cluster as a cofactor.

It localises to the cytoplasm. The catalysed reaction is adenosine(2503) in 23S rRNA + 2 reduced [2Fe-2S]-[ferredoxin] + 2 S-adenosyl-L-methionine = 2-methyladenosine(2503) in 23S rRNA + 5'-deoxyadenosine + L-methionine + 2 oxidized [2Fe-2S]-[ferredoxin] + S-adenosyl-L-homocysteine. It carries out the reaction adenosine(37) in tRNA + 2 reduced [2Fe-2S]-[ferredoxin] + 2 S-adenosyl-L-methionine = 2-methyladenosine(37) in tRNA + 5'-deoxyadenosine + L-methionine + 2 oxidized [2Fe-2S]-[ferredoxin] + S-adenosyl-L-homocysteine. Functionally, specifically methylates position 2 of adenine 2503 in 23S rRNA and position 2 of adenine 37 in tRNAs. The chain is Probable dual-specificity RNA methyltransferase RlmN from Aquifex aeolicus (strain VF5).